Consider the following 244-residue polypeptide: 7-cyano-7-deazaguanine synthase (244 aa).

14 to 24 (FSGGQDSATCV) contributes to the ATP binding site. Zn(2+) is bound by residues cysteine 202, cysteine 217, cysteine 220, and cysteine 223.

This sequence belongs to the QueC family. The cofactor is Zn(2+).

The enzyme catalyses 7-carboxy-7-deazaguanine + NH4(+) + ATP = 7-cyano-7-deazaguanine + ADP + phosphate + H2O + H(+). The protein operates within purine metabolism; 7-cyano-7-deazaguanine biosynthesis. In terms of biological role, catalyzes the ATP-dependent conversion of 7-carboxy-7-deazaguanine (CDG) to 7-cyano-7-deazaguanine (preQ(0)). The sequence is that of 7-cyano-7-deazaguanine synthase from Burkholderia cenocepacia (strain HI2424).